The sequence spans 392 residues: Probable tRNA pseudouridine synthase D 1 (392 aa).

Aspartate 92 (nucleophile) is an active-site residue. Positions 167–354 (YFLNYYGVQR…FIGDRRAMIG (188 aa)) constitute a TRUD domain.

This sequence belongs to the pseudouridine synthase TruD family.

It carries out the reaction uridine(13) in tRNA = pseudouridine(13) in tRNA. Functionally, could be responsible for synthesis of pseudouridine from uracil-13 in transfer RNAs. This Methanocaldococcus jannaschii (strain ATCC 43067 / DSM 2661 / JAL-1 / JCM 10045 / NBRC 100440) (Methanococcus jannaschii) protein is Probable tRNA pseudouridine synthase D 1.